We begin with the raw amino-acid sequence, 301 residues long: Heme A synthase (301 aa).

Over Met1 to Leu5 the chain is Cytoplasmic. A helical membrane pass occupies residues Ala6–Val26. At Thr27–Arg62 the chain is on the extracellular side. A disulfide bond links Cys35 and Cys42. The active site involves Glu58. His61 is a heme o binding site. A helical transmembrane segment spans residues Val63–Val83. At Lys84 to Lys90 the chain is on the cytoplasmic side. The chain crosses the membrane as a helical span at residues Ile91–Val111. Residues Ile112–Ala121 lie on the Extracellular side of the membrane. A helical membrane pass occupies residues Leu122–Phe142. His123 contributes to the heme o binding site. Topologically, residues Glu143–His158 are cytoplasmic. The chain crosses the membrane as a helical span at residues Leu159 to Leu179. Over Gly180–Gln203 the chain is Extracellular. A disulfide bridge connects residues Cys185 and Cys191. Residues Met204 to Ala224 form a helical membrane-spanning segment. His206 is a heme b binding site. Residues Arg225–Arg234 lie on the Cytoplasmic side of the membrane. The helical transmembrane segment at Gly235–Leu255 threads the bilayer. The Extracellular portion of the chain corresponds to Gly256–Ala259. The helical transmembrane segment at Thr260–Leu280 threads the bilayer. His266 provides a ligand contact to heme b. At Ser281 to Gly301 the chain is on the cytoplasmic side.

Belongs to the COX15/CtaA family. Type 1 subfamily. In terms of assembly, interacts with CtaB. Heme b is required as a cofactor.

It localises to the cell membrane. The catalysed reaction is Fe(II)-heme o + 2 A + H2O = Fe(II)-heme a + 2 AH2. It participates in porphyrin-containing compound metabolism; heme A biosynthesis; heme A from heme O: step 1/1. Its function is as follows. Catalyzes the conversion of heme O to heme A by two successive hydroxylations of the methyl group at C8. The first hydroxylation forms heme I, the second hydroxylation results in an unstable dihydroxymethyl group, which spontaneously dehydrates, resulting in the formyl group of heme A. The polypeptide is Heme A synthase (Exiguobacterium sp. (strain ATCC BAA-1283 / AT1b)).